We begin with the raw amino-acid sequence, 137 residues long: Large ribosomal subunit protein uL16 (137 aa).

The protein belongs to the universal ribosomal protein uL16 family. In terms of assembly, part of the 50S ribosomal subunit.

In terms of biological role, binds 23S rRNA and is also seen to make contacts with the A and possibly P site tRNAs. The chain is Large ribosomal subunit protein uL16 from Chlamydia abortus (strain DSM 27085 / S26/3) (Chlamydophila abortus).